The sequence spans 383 residues: MYTHYLKNLISFESVTPNSAGAVEYIDGLLKQHGFKTEIKIFGDSKNERVTNLYGVFGSNEPNICFVGHVDVVPAGNHEFWHNSNPFKFHEQDGKIYGRGAVDMKGAIACFLAASLNFIKNNMDFKGSISFLITSDEEGKSTHGTKEMLQYIYDQRYKIDFAVVGEPTCEKEIGDTIKIGRRGSVNFKLNIVGLAGHVAYPHKANNPLPCLIKILNELTNIRLDEGTEFFQNSNLEVTNIDVGNDILNTIPASAEACFNIRFNSLHSVETLSQLIEQIIKQYCKEYKVDYKLEYSSSAESFVQNPNDNDKIKEFADVIERTLKIKSEFSTSGGTSDARFVKDYCSLVEFGLLSEMAHKINEYTKISDLQKLYDVYYNFLMEIF.

Position 69 (His-69) interacts with Zn(2+). The active site involves Asp-71. Residue Asp-103 participates in Zn(2+) binding. Glu-137 acts as the Proton acceptor in catalysis. The Zn(2+) site is built by Glu-138, Glu-166, and His-357.

Belongs to the peptidase M20A family. DapE subfamily. In terms of assembly, homodimer. Requires Zn(2+) as cofactor. It depends on Co(2+) as a cofactor.

It catalyses the reaction N-succinyl-(2S,6S)-2,6-diaminopimelate + H2O = (2S,6S)-2,6-diaminopimelate + succinate. It functions in the pathway amino-acid biosynthesis; L-lysine biosynthesis via DAP pathway; LL-2,6-diaminopimelate from (S)-tetrahydrodipicolinate (succinylase route): step 3/3. Its function is as follows. Catalyzes the hydrolysis of N-succinyl-L,L-diaminopimelic acid (SDAP), forming succinate and LL-2,6-diaminopimelate (DAP), an intermediate involved in the bacterial biosynthesis of lysine and meso-diaminopimelic acid, an essential component of bacterial cell walls. This chain is Succinyl-diaminopimelate desuccinylase, found in Rickettsia typhi (strain ATCC VR-144 / Wilmington).